The primary structure comprises 405 residues: Replication factor C large subunit (405 aa).

Position 47 to 54 (47 to 54) interacts with ATP; that stretch reads GPPGVGKT.

It belongs to the activator 1 small subunits family. RfcL subfamily. In terms of assembly, heteromultimer composed of small subunits (RfcS) and large subunits (RfcL).

Its function is as follows. Part of the RFC clamp loader complex which loads the PCNA sliding clamp onto DNA. This Saccharolobus islandicus (strain M.16.27) (Sulfolobus islandicus) protein is Replication factor C large subunit.